The sequence spans 312 residues: Aspartate carbamoyltransferase catalytic subunit (312 aa).

Residues arginine 57 and threonine 58 each coordinate carbamoyl phosphate. Lysine 85 contributes to the L-aspartate binding site. Positions 107, 135, and 138 each coordinate carbamoyl phosphate. L-aspartate is bound by residues arginine 168 and arginine 222. Carbamoyl phosphate contacts are provided by glycine 264 and proline 265.

This sequence belongs to the aspartate/ornithine carbamoyltransferase superfamily. ATCase family. As to quaternary structure, heterododecamer (2C3:3R2) of six catalytic PyrB chains organized as two trimers (C3), and six regulatory PyrI chains organized as three dimers (R2).

It catalyses the reaction carbamoyl phosphate + L-aspartate = N-carbamoyl-L-aspartate + phosphate + H(+). Its pathway is pyrimidine metabolism; UMP biosynthesis via de novo pathway; (S)-dihydroorotate from bicarbonate: step 2/3. Catalyzes the condensation of carbamoyl phosphate and aspartate to form carbamoyl aspartate and inorganic phosphate, the committed step in the de novo pyrimidine nucleotide biosynthesis pathway. The polypeptide is Aspartate carbamoyltransferase catalytic subunit (Carboxydothermus hydrogenoformans (strain ATCC BAA-161 / DSM 6008 / Z-2901)).